A 62-amino-acid polypeptide reads, in one-letter code: MALDYKLLEIVACPICKGKLNYDKERSELVCRADKLAYPVEDDIPVLLENRARPLKEEELPL.

It belongs to the UPF0434 family.

In Tolumonas auensis (strain DSM 9187 / NBRC 110442 / TA 4), this protein is UPF0434 protein Tola_2233.